A 658-amino-acid polypeptide reads, in one-letter code: Protein translocase subunit SecA 3 (658 aa).

Residues glutamine 111, 129–133 (GEGKT), and aspartate 536 each bind ATP.

It belongs to the SecA family. In terms of assembly, monomer and homodimer. Part of the essential Sec protein translocation apparatus which comprises SecA, SecYEG and auxiliary proteins SecDF-YajC and YidC.

The protein localises to the cell inner membrane. It is found in the cytoplasm. It catalyses the reaction ATP + H2O + cellular proteinSide 1 = ADP + phosphate + cellular proteinSide 2.. In terms of biological role, part of the Sec protein translocase complex. Interacts with the SecYEG preprotein conducting channel. Has a central role in coupling the hydrolysis of ATP to the transfer of proteins into and across the cell membrane, serving both as a receptor for the preprotein-SecB complex and as an ATP-driven molecular motor driving the stepwise translocation of polypeptide chains across the membrane. The chain is Protein translocase subunit SecA 3 from Magnetococcus marinus (strain ATCC BAA-1437 / JCM 17883 / MC-1).